Reading from the N-terminus, the 324-residue chain is Putative exosome complex exonuclease RRP42 (324 aa).

It belongs to the RNase PH family. Component of the RNA exosome complex.

The protein resides in the nucleus. It is found in the nucleolus. The protein localises to the cytoplasm. Non-catalytic component of the RNA exosome complex which has 3'-&gt;5' exoribonuclease activity and participates in a multitude of cellular RNA processing and degradation events. In Dictyostelium discoideum (Social amoeba), this protein is Putative exosome complex exonuclease RRP42 (exosc7).